The sequence spans 143 residues: Transcriptional regulator MraZ (143 aa).

2 SpoVT-AbrB domains span residues 5–47 (THTP…PMQE) and 76–119 (ASSE…DLRT).

Belongs to the MraZ family. Forms oligomers.

It localises to the cytoplasm. It is found in the nucleoid. In Kineococcus radiotolerans (strain ATCC BAA-149 / DSM 14245 / SRS30216), this protein is Transcriptional regulator MraZ.